We begin with the raw amino-acid sequence, 748 residues long: Long-chain-alcohol oxidase FAO4B (748 aa).

Over residues 1–18 the composition is skewed to basic residues; that stretch reads MEDVRRRNRGHPLLRSKK. A disordered region spans residues 1 to 25; the sequence is MEDVRRRNRGHPLLRSKKRGEGYNH. 2 helical membrane passes run 89 to 109 and 140 to 160; these read IILM…SLCL and FLLP…FYFF. Residue 238–253 coordinates FAD; it reads CDAVVVGSGSGGGVAA. His-679 functions as the Proton acceptor in the catalytic mechanism.

Belongs to the GMC oxidoreductase family.

It is found in the membrane. It catalyses the reaction a long-chain primary fatty alcohol + O2 = a long-chain fatty aldehyde + H2O2. In terms of biological role, long-chain fatty alcohol oxidase involved in the omega-oxidation pathway of lipid degradation. The protein is Long-chain-alcohol oxidase FAO4B (FAO4B) of Arabidopsis thaliana (Mouse-ear cress).